The following is a 452-amino-acid chain: RNA polymerase II-associated protein rba50 (452 aa).

Disordered regions lie at residues 60 to 83 (LRKNKESPGLEGKGNLDDQGIDEE), 125 to 202 (EREL…QTKR), and 223 to 261 (PIKGNEEDDASEDAKHSPKKHSPALSDGTTSNDGAPLEF). A compositionally biased stretch (basic and acidic residues) spans 125–135 (ERELAQRKDRS). The span at 136 to 154 (SQVNTPDLSQRPSDDSFLS) shows a compositional bias: polar residues. Over residues 156-165 (EKLRSSEKLN) the composition is skewed to basic and acidic residues. Low complexity predominate over residues 170–191 (SVLSSEAVDSSSGSPSPPMALS).

It belongs to the RPAP1 family. In terms of assembly, interacts with RNA polymerase II.

It localises to the cytoplasm. It is found in the nucleus. In terms of biological role, forms an interface between the RNA polymerase II enzyme and chaperone/scaffolding proteins, suggesting that it is required to connect RNA polymerase II to regulators of protein complex formation. The sequence is that of RNA polymerase II-associated protein rba50 (rba50) from Schizosaccharomyces pombe (strain 972 / ATCC 24843) (Fission yeast).